A 158-amino-acid chain; its full sequence is NAD(P)H-quinone oxidoreductase subunit J, chloroplastic (158 aa).

The protein belongs to the complex I 30 kDa subunit family. NDH is composed of at least 16 different subunits, 5 of which are encoded in the nucleus.

It localises to the plastid. The protein resides in the chloroplast thylakoid membrane. The catalysed reaction is a plastoquinone + NADH + (n+1) H(+)(in) = a plastoquinol + NAD(+) + n H(+)(out). The enzyme catalyses a plastoquinone + NADPH + (n+1) H(+)(in) = a plastoquinol + NADP(+) + n H(+)(out). NDH shuttles electrons from NAD(P)H:plastoquinone, via FMN and iron-sulfur (Fe-S) centers, to quinones in the photosynthetic chain and possibly in a chloroplast respiratory chain. The immediate electron acceptor for the enzyme in this species is believed to be plastoquinone. Couples the redox reaction to proton translocation, and thus conserves the redox energy in a proton gradient. The polypeptide is NAD(P)H-quinone oxidoreductase subunit J, chloroplastic (Nandina domestica (Heavenly bamboo)).